Consider the following 194-residue polypeptide: Xanthine phosphoribosyltransferase (194 aa).

The xanthine site is built by L20 and N27. 128-132 (ANGCA) contacts 5-phospho-alpha-D-ribose 1-diphosphate. Residue K156 coordinates xanthine.

The protein belongs to the purine/pyrimidine phosphoribosyltransferase family. Xpt subfamily. Homodimer.

It is found in the cytoplasm. The enzyme catalyses XMP + diphosphate = xanthine + 5-phospho-alpha-D-ribose 1-diphosphate. The protein operates within purine metabolism; XMP biosynthesis via salvage pathway; XMP from xanthine: step 1/1. Its function is as follows. Converts the preformed base xanthine, a product of nucleic acid breakdown, to xanthosine 5'-monophosphate (XMP), so it can be reused for RNA or DNA synthesis. The chain is Xanthine phosphoribosyltransferase from Lachnoclostridium phytofermentans (strain ATCC 700394 / DSM 18823 / ISDg) (Clostridium phytofermentans).